The following is a 149-amino-acid chain: Myoglobin (149 aa).

Ala2 carries the post-translational modification N-acetylalanine. A Globin domain is found at 2 to 143; sequence ABWDKVNSVW…ICSDIEKEYK (142 aa). Heme b is bound at residue His89.

Belongs to the globin family. In terms of assembly, monomeric.

The protein localises to the cytoplasm. Its subcellular location is the sarcoplasm. The catalysed reaction is Fe(III)-heme b-[protein] + nitric oxide + H2O = Fe(II)-heme b-[protein] + nitrite + 2 H(+). It catalyses the reaction H2O2 + AH2 = A + 2 H2O. Its function is as follows. Monomeric heme protein which primary function is to store oxygen and facilitate its diffusion within muscle tissues. Reversibly binds oxygen through a pentacoordinated heme iron and enables its timely and efficient release as needed during periods of heightened demand. Depending on the oxidative conditions of tissues and cells, and in addition to its ability to bind oxygen, it also has a nitrite reductase activity whereby it regulates the production of bioactive nitric oxide. Under stress conditions, like hypoxia and anoxia, it also protects cells against reactive oxygen species thanks to its pseudoperoxidase activity. In Hemitriakis japanica (Japanese topeshark), this protein is Myoglobin (mb).